The sequence spans 516 residues: UDP-N-acetylmuramyl-tripeptide synthetase (516 aa).

Serine 36 provides a ligand contact to UDP-N-acetyl-alpha-D-muramoyl-L-alanyl-D-glutamate. 113–119 (GTKGKTT) contacts ATP. Residues 159–160 (TT), serine 186, and arginine 194 contribute to the UDP-N-acetyl-alpha-D-muramoyl-L-alanyl-D-glutamate site. N6-carboxylysine is present on lysine 228.

It belongs to the MurCDEF family. MurE subfamily. In terms of processing, carboxylation is probably crucial for Mg(2+) binding and, consequently, for the gamma-phosphate positioning of ATP.

The protein resides in the cytoplasm. Its pathway is cell wall biogenesis; peptidoglycan biosynthesis. Functionally, catalyzes the addition of an amino acid to the nucleotide precursor UDP-N-acetylmuramoyl-L-alanyl-D-glutamate (UMAG) in the biosynthesis of bacterial cell-wall peptidoglycan. In Limosilactobacillus reuteri (strain DSM 20016) (Lactobacillus reuteri), this protein is UDP-N-acetylmuramyl-tripeptide synthetase.